The sequence spans 858 residues: Elongation factor 2b (858 aa).

The 346-residue stretch at Ser17–Val362 folds into the tr-type G domain. GTP-binding positions include Ala26 to Ser33, Asn158 to Asp161, and Ser216 to Leu218. His715 is subject to Diphthamide.

The protein belongs to the TRAFAC class translation factor GTPase superfamily. Classic translation factor GTPase family. EF-G/EF-2 subfamily. In terms of assembly, binds to 80S ribosomes. Actively translating ribosomes show mutually exclusive binding of eIF5a (EIF5A or EIF5A2) and EEF2/eEF2. Interacts with serbp1; interaction sequesters eef2/eEF2 at the A-site of the ribosome, thereby blocking the interaction sites of the mRNA-tRNA complex, promoting ribosome stabilization and hibernation. Interacts with habp4; interaction takes place at the A-site of hibernating ribosomes and promotes ribosome stabilization.

Its subcellular location is the cytoplasm. It is found in the nucleus. The catalysed reaction is GTP + H2O = GDP + phosphate + H(+). Catalyzes the GTP-dependent ribosomal translocation step during translation elongation. During this step, the ribosome changes from the pre-translocational (PRE) to the post-translocational (POST) state as the newly formed A-site-bound peptidyl-tRNA and P-site-bound deacylated tRNA move to the P and E sites, respectively. Catalyzes the coordinated movement of the two tRNA molecules, the mRNA and conformational changes in the ribosome. The sequence is that of Elongation factor 2b from Danio rerio (Zebrafish).